Here is a 798-residue protein sequence, read N- to C-terminus: Protocadherin beta-13 (798 aa).

An N-terminal signal peptide occupies residues 1–28; sequence MEASGKLICRQRQVLFSFLLLGLSLAGA. Topologically, residues 29 to 690 are extracellular; the sequence is AEPRSYSVVE…AQADLLTVYL (662 aa). Cadherin domains follow at residues 36–134, 139–243, 248–348, 353–451, and 456–561; these read VVEE…SPVF, MLVK…APEF, YRVQ…APEV, FTSP…APAF, and YTLF…SPFV. N-linked (GlcNAc...) asparagine glycans are attached at residues asparagine 418 and asparagine 436. A glycan (N-linked (GlcNAc...) asparagine) is linked at asparagine 567. In terms of domain architecture, Cadherin 6 spans 568–671; sequence GSAPCTELVP…LVDGFSQPYL (104 aa). Residues 691–711 traverse the membrane as a helical segment; it reads VVALASVSSLFLFSVLLFVAV. Topologically, residues 712 to 798 are cytoplasmic; it reads RLCRRSRAAS…FPNNFGFNIQ (87 aa).

It is found in the cell membrane. In terms of biological role, potential calcium-dependent cell-adhesion protein. May be involved in the establishment and maintenance of specific neuronal connections in the brain. The sequence is that of Protocadherin beta-13 (PCDHB13) from Homo sapiens (Human).